Consider the following 215-residue polypeptide: Pyrrolidone-carboxylate peptidase (215 aa).

Active-site residues include E80, C143, and H167.

It belongs to the peptidase C15 family. Homotetramer.

It localises to the cytoplasm. It carries out the reaction Release of an N-terminal pyroglutamyl group from a polypeptide, the second amino acid generally not being Pro.. Functionally, removes 5-oxoproline from various penultimate amino acid residues except L-proline. The chain is Pyrrolidone-carboxylate peptidase from Bacillus anthracis.